A 297-amino-acid chain; its full sequence is Ribosomal protein L11 methyltransferase (297 aa).

4 residues coordinate S-adenosyl-L-methionine: Thr152, Gly173, Asp195, and Asn234.

Belongs to the methyltransferase superfamily. PrmA family.

Its subcellular location is the cytoplasm. The enzyme catalyses L-lysyl-[protein] + 3 S-adenosyl-L-methionine = N(6),N(6),N(6)-trimethyl-L-lysyl-[protein] + 3 S-adenosyl-L-homocysteine + 3 H(+). Functionally, methylates ribosomal protein L11. The protein is Ribosomal protein L11 methyltransferase of Cupriavidus pinatubonensis (strain JMP 134 / LMG 1197) (Cupriavidus necator (strain JMP 134)).